The chain runs to 97 residues: Conotoxin Cal6.1e (97 aa).

The N-terminal stretch at 1–22 is a signal peptide; sequence MKLTTVLIVAVLVLAACQFTVT. Positions 23–49 are disordered; it reads DNSGDDTENPSLRSAGENQNPDSTKTI. A propeptide spanning residues 23-60 is cleaved from the precursor; it reads DNSGDDTENPSLRSAGENQNPDSTKTITARATRARTNM. Positions 31–45 are enriched in polar residues; that stretch reads NPSLRSAGENQNPDS. Disulfide bonds link cysteine 71-cysteine 87, cysteine 78-cysteine 91, and cysteine 86-cysteine 96.

It belongs to the conotoxin O1 superfamily. As to expression, expressed by the venom duct.

It is found in the secreted. In terms of biological role, probable neurotoxin with unknown target. Possibly targets ion channels. In Californiconus californicus (California cone), this protein is Conotoxin Cal6.1e.